Here is a 160-residue protein sequence, read N- to C-terminus: Nucleotide-binding protein Ping_2261 (160 aa).

It belongs to the YajQ family.

Nucleotide-binding protein. This chain is Nucleotide-binding protein Ping_2261, found in Psychromonas ingrahamii (strain DSM 17664 / CCUG 51855 / 37).